A 1117-amino-acid chain; its full sequence is Centrosomal protein of 126 kDa (1117 aa).

The tract at residues 1 to 42 (MLAGRPGTRSAVGELGTESSDNLDRAPLGPRESGGHHRPGSY) is disordered. Residues 49–121 (LEKNLEEERQ…EEVTEKFQRA (73 aa)) are a coiled coil. Disordered regions lie at residues 643-664 (AENS…QQFH) and 730-759 (KKEE…IIRK). Residues 730–744 (KKEESKIPVHDDSKT) show a composition bias toward basic and acidic residues. Basic residues predominate over residues 745–758 (KQGKPQRGRAKIIR).

As to quaternary structure, interacts with DCTN1. Expressed in brain, lung, skeletal muscle, kidney, pancreas, testis and ovary.

Its subcellular location is the midbody. It localises to the cytoplasm. It is found in the cytoskeleton. The protein localises to the microtubule organizing center. The protein resides in the centrosome. Its subcellular location is the cilium basal body. In terms of biological role, participates in cytokinesis. Necessary for microtubules and mitotic spindle organization. Involved in primary cilium formation. This is Centrosomal protein of 126 kDa from Homo sapiens (Human).